The primary structure comprises 312 residues: Ornithine carbamoyltransferase (312 aa).

Carbamoyl phosphate-binding positions include 50 to 53 (STRT), glutamine 77, arginine 101, and 128 to 131 (HPCQ). L-ornithine is bound by residues asparagine 159, aspartate 223, and 227-228 (SM). Residues 263 to 264 (CL) and arginine 291 each bind carbamoyl phosphate.

It belongs to the aspartate/ornithine carbamoyltransferase superfamily. OTCase family.

Its subcellular location is the cytoplasm. The catalysed reaction is carbamoyl phosphate + L-ornithine = L-citrulline + phosphate + H(+). It participates in amino-acid biosynthesis; L-arginine biosynthesis; L-arginine from L-ornithine and carbamoyl phosphate: step 1/3. Its function is as follows. Reversibly catalyzes the transfer of the carbamoyl group from carbamoyl phosphate (CP) to the N(epsilon) atom of ornithine (ORN) to produce L-citrulline. The chain is Ornithine carbamoyltransferase from Acidothermus cellulolyticus (strain ATCC 43068 / DSM 8971 / 11B).